We begin with the raw amino-acid sequence, 272 residues long: Type II secretion system protein C (272 aa).

The Cytoplasmic segment spans residues 1-16 (MNISKLPPLSPSVIRR). Residues 17–35 (ILFYLLMLLFCQQLAMIFW) form a helical membrane-spanning segment. Over 36-272 (RIGLPDNAPV…DIYMEFGGDE (237 aa)) the chain is Periplasmic.

The protein belongs to the GSP C family.

It localises to the cell inner membrane. Its function is as follows. Involved in a type II secretion system (T2SS, formerly general secretion pathway, GSP) for the export of proteins. Required for the translocation of the multiple pectic enzymes. The polypeptide is Type II secretion system protein C (outC) (Dickeya dadantii (strain 3937) (Erwinia chrysanthemi (strain 3937))).